The sequence spans 178 residues: Mediator of RNA polymerase II transcription subunit 21 (178 aa).

The disordered stretch occupies residues 36-91 (DDDDVNSYSNMAANAPLPQSQQQRQQQKKQQEPQQEIEQPQQQSNPESKSISPPKE). A compositionally biased stretch (low complexity) spans 67 to 85 (EPQQEIEQPQQQSNPESKS). A coiled-coil region spans residues 128–169 (NEQMNLINELSDKLQAIEEERIQKIKEKDNLLNLLESMIKEV).

Belongs to the Mediator complex subunit 21 family. Component of the Mediator complex.

It localises to the nucleus. Functionally, component of the Mediator complex, a coactivator involved in the regulated transcription of nearly all RNA polymerase II-dependent genes. Mediator functions as a bridge to convey information from gene-specific regulatory proteins to the basal RNA polymerase II transcription machinery. Mediator is recruited to promoters by direct interactions with regulatory proteins and serves as a scaffold for the assembly of a functional preinitiation complex with RNA polymerase II and the general transcription factors. This Candida albicans (strain SC5314 / ATCC MYA-2876) (Yeast) protein is Mediator of RNA polymerase II transcription subunit 21 (SRB7).